The primary structure comprises 339 residues: Glycerol-3-phosphate dehydrogenase [NAD(P)+] (339 aa).

NADPH is bound by residues serine 14, tyrosine 15, histidine 35, and lysine 109. Lysine 109, glycine 138, and threonine 140 together coordinate sn-glycerol 3-phosphate. Alanine 142 is an NADPH binding site. Lysine 194, aspartate 247, serine 257, arginine 258, and asparagine 259 together coordinate sn-glycerol 3-phosphate. Residue lysine 194 is the Proton acceptor of the active site. Arginine 258 serves as a coordination point for NADPH. NADPH-binding residues include valine 282 and glutamate 284.

The protein belongs to the NAD-dependent glycerol-3-phosphate dehydrogenase family.

The protein resides in the cytoplasm. It catalyses the reaction sn-glycerol 3-phosphate + NAD(+) = dihydroxyacetone phosphate + NADH + H(+). The enzyme catalyses sn-glycerol 3-phosphate + NADP(+) = dihydroxyacetone phosphate + NADPH + H(+). It functions in the pathway membrane lipid metabolism; glycerophospholipid metabolism. Functionally, catalyzes the reduction of the glycolytic intermediate dihydroxyacetone phosphate (DHAP) to sn-glycerol 3-phosphate (G3P), the key precursor for phospholipid synthesis. In Shewanella halifaxensis (strain HAW-EB4), this protein is Glycerol-3-phosphate dehydrogenase [NAD(P)+].